The following is a 322-amino-acid chain: Aspartate--ammonia ligase (322 aa).

The protein belongs to the class-II aminoacyl-tRNA synthetase family. AsnA subfamily.

The protein resides in the cytoplasm. It catalyses the reaction L-aspartate + NH4(+) + ATP = L-asparagine + AMP + diphosphate + H(+). It functions in the pathway amino-acid biosynthesis; L-asparagine biosynthesis; L-asparagine from L-aspartate (ammonia route): step 1/1. This is Aspartate--ammonia ligase from Lactiplantibacillus plantarum (strain ATCC BAA-793 / NCIMB 8826 / WCFS1) (Lactobacillus plantarum).